The following is a 787-amino-acid chain: Integrin beta-6 (787 aa).

The first 21 residues, Met-1 to Gly-21, serve as a signal peptide directing secretion. Residues Gly-22–Gln-71 form the PSI domain. The Extracellular portion of the chain corresponds to Gly-22–Pro-708. Intrachain disulfides connect Cys-23–Cys-41, Cys-31–Cys-454, Cys-34–Cys-59, Cys-44–Cys-70, Cys-197–Cys-204, Cys-252–Cys-293, Cys-394–Cys-406, Cys-426–Cys-452, Cys-456–Cys-476, Cys-467–Cys-479, Cys-481–Cys-490, Cys-492–Cys-519, Cys-502–Cys-517, Cys-511–Cys-522, Cys-524–Cys-537, Cys-539–Cys-560, Cys-544–Cys-558, Cys-552–Cys-563, and Cys-565–Cys-574. N-linked (GlcNAc...) asparagine glycans are attached at residues Asn-48 and Asn-97. In terms of domain architecture, VWFA spans Tyr-131 to Leu-371. Positions 140, 142, and 144 each coordinate Mg(2+). Residues Ser-144, Asp-147, Asp-148, and Glu-179 each coordinate Ca(2+). Residues Asn-235, Asp-237, Pro-239, and Glu-240 each contribute to the Ca(2+) site. Glu-240 contributes to the Mg(2+) binding site. N-linked (GlcNAc...) asparagine glycosylation occurs at Asn-260. Asp-271 and Lys-355 together coordinate Ca(2+). Asn-387 carries an N-linked (GlcNAc...) asparagine glycan. The N-linked (GlcNAc...) asparagine glycan is linked to Asn-418. I-EGF domains follow at residues Cys-456–Glu-491, Cys-492–Gln-538, Cys-539–Asn-575, and Cys-576–Glu-615. Residues Asn-463 and Asn-471 are each glycosylated (N-linked (GlcNAc...) asparagine). Asn-541 carries N-linked (GlcNAc...) asparagine glycosylation. The N-linked (GlcNAc...) asparagine glycan is linked to Asn-575. Disulfide bonds link Cys-576–Cys-599, Cys-583–Cys-597, Cys-591–Cys-602, Cys-604–Cys-614, Cys-617–Cys-620, Cys-624–Cys-669, Cys-630–Cys-649, Cys-633–Cys-645, and Cys-677–Cys-701. A helical transmembrane segment spans residues Met-709–Trp-729. An interaction with HAX1 region spans residues Lys-730 to Thr-757. The Cytoplasmic portion of the chain corresponds to Lys-730–Gly-787.

The protein belongs to the integrin beta chain family. In terms of assembly, heterodimer of an alpha and a beta subunit. Interacts with FLNB. Interacts with HAX1. ITGAV:ITGB6 interacts with FBN1. ITGAV:ITGB6 interacts with TGFB1.

The protein localises to the cell membrane. Its subcellular location is the cell junction. It localises to the focal adhesion. Integrin alpha-V:beta-6 (ITGAV:ITGB6) is a receptor for fibronectin and cytotactin. It recognizes the sequence R-G-D in its ligands. ITGAV:ITGB6 acts as a receptor for fibrillin-1 (FBN1) and mediates R-G-D-dependent cell adhesion to FBN1. Integrin alpha-V:beta-6 (ITGAV:ITGB6) mediates R-G-D-dependent release of transforming growth factor beta-1 (TGF-beta-1) from regulatory Latency-associated peptide (LAP), thereby playing a key role in TGF-beta-1 activation. The chain is Integrin beta-6 (Itgb6) from Mus musculus (Mouse).